A 181-amino-acid polypeptide reads, in one-letter code: MALILPCTFCTSLQKKNFPINRRYITNFRRGATTATCEFRIPVEVSTPSDRGSLVVPSHKVTVHDRQRGVVHEFEVPEDQYILHSAESQNISLPFACRHGCCTSCAVRVKSGELRQPQALGISAELKSQGYALLCVGFPTSDLEVETQDEDEVYWLQFGRYFARGPIERDDYALELAMGDE.

A chloroplast-targeting transit peptide spans 1–44 (MALILPCTFCTSLQKKNFPINRRYITNFRRGATTATCEFRIPVE). The 2Fe-2S ferredoxin-type domain maps to 59 to 151 (HKVTVHDRQR…DLEVETQDED (93 aa)). Residues Cys-97, Cys-102, Cys-105, and Cys-135 each contribute to the [2Fe-2S] cluster site.

It belongs to the 2Fe2S plant-type ferredoxin family. Requires [2Fe-2S] cluster as cofactor.

The protein resides in the plastid. It is found in the chloroplast. Ferredoxins are iron-sulfur proteins that transfer electrons in a wide variety of metabolic reactions. Mediates alternative electron partitioning in conditions of acceptor limitation at photosystem I. The protein is Ferredoxin C 2, chloroplastic of Arabidopsis thaliana (Mouse-ear cress).